The chain runs to 271 residues: Calretinin (271 aa).

EF-hand domains are found at residues 16 to 51, 63 to 98, 107 to 142, 151 to 186, 195 to 230, and 235 to 270; these read LTASQFLEIWKHFDADGNGYIEGKELENFFQELEKA, NFGEKMKEFMQKYDKNSDGKIEMAELAQILPTEENF, GSSAEFMEAWRKYDTDRSGYIEANELKGFLSDLLKK, KLQEYTQTILRMFDLNGDGKLGLSEMSRLLPVQENF, LTSEEFNAIFTFYDKDRSGYIDEHELDALLKDLYEK, and MNIQQLTNYRKSVMSLAEAGKLYRKDLEIVLCSEPP. Residues Asp-29, Asp-31, Asn-33, Tyr-35, Glu-40, Asp-76, Asn-78, Asp-80, Lys-82, Glu-87, Asp-120, Asp-122, Ser-124, Tyr-126, Glu-131, Asp-164, Asn-166, Asp-168, Lys-170, Glu-175, Asp-208, Asp-210, Ser-212, Tyr-214, and Glu-219 each coordinate Ca(2+). Residue Tyr-214 is modified to Phosphotyrosine.

This sequence belongs to the calbindin family. Brain.

It is found in the synapse. It localises to the cell projection. Its subcellular location is the dendrite. In terms of biological role, calcium-binding protein involved in calcium homeostasis and signal transduction. It plays a critical role in buffering intracellular calcium levels and modulating calcium-dependent signaling pathways. Predominantly expressed in specific neuronal populations, influences synaptic plasticity and neuronal excitability, contributing to learning and memory. During embryonic development, it facilitates neuronal differentiation and maturation. This chain is Calretinin, found in Homo sapiens (Human).